The sequence spans 226 residues: Small ribosomal subunit protein uS3 (226 aa).

Positions 39-107 constitute a KH type-2 domain; the sequence is IRAYIKKNVV…EVTLNIKEVK (69 aa).

Belongs to the universal ribosomal protein uS3 family. In terms of assembly, part of the 30S ribosomal subunit. Forms a tight complex with proteins S10 and S14.

In terms of biological role, binds the lower part of the 30S subunit head. Binds mRNA in the 70S ribosome, positioning it for translation. The chain is Small ribosomal subunit protein uS3 from Pelagibacter ubique (strain HTCC1062).